Here is a 340-residue protein sequence, read N- to C-terminus: GTPase Obg (340 aa).

Residues 1-159 (MGFIDEVKLC…KHVLLKLKVL (159 aa)) form the Obg domain. The region spanning 160 to 329 (SDVGIIGMPN…LSEKLKKSNS (170 aa)) is the OBG-type G domain. Residues 166–173 (GMPNAGKS), 191–195 (FTTVR), 212–215 (DIPG), 279–282 (NKCD), and 310–312 (NGD) contribute to the GTP site. The Mg(2+) site is built by serine 173 and threonine 193.

It belongs to the TRAFAC class OBG-HflX-like GTPase superfamily. OBG GTPase family. As to quaternary structure, monomer. The cofactor is Mg(2+).

Its subcellular location is the cytoplasm. Functionally, an essential GTPase which binds GTP, GDP and possibly (p)ppGpp with moderate affinity, with high nucleotide exchange rates and a fairly low GTP hydrolysis rate. Plays a role in control of the cell cycle, stress response, ribosome biogenesis and in those bacteria that undergo differentiation, in morphogenesis control. This is GTPase Obg from Wolbachia sp. subsp. Drosophila simulans (strain wRi).